A 387-amino-acid chain; its full sequence is Major outer membrane porin (387 aa).

Positions 1 to 22 (MKKLLKSVLAFAVLGSASSLHA) are cleaved as a signal peptide.

Belongs to the chlamydial porin (CP) (TC 1.B.2) family. As to quaternary structure, part of a disulfide cross-linked outer membrane complex (COMC) composed of the major outer membrane porin (MOMP), the small cysteine-rich protein (OmcA) and the large cysteine-rich periplasmic protein (OmcB).

The protein localises to the cell outer membrane. In terms of biological role, in elementary bodies (EBs, the infectious stage, which is able to survive outside the host cell) provides the structural integrity of the outer envelope through disulfide cross-links with the small cysteine-rich protein and the large cysteine-rich periplasmic protein. It has been described in publications as the Sarkosyl-insoluble COMC (Chlamydia outer membrane complex), and serves as the functional equivalent of peptidoglycan. Permits diffusion of specific solutes through the outer membrane. The polypeptide is Major outer membrane porin (ompA) (Chlamydia muridarum (strain MoPn / Nigg)).